The chain runs to 224 residues: Large ribosomal subunit protein uL16z (224 aa).

The protein belongs to the universal ribosomal protein uL16 family. As to quaternary structure, component of the small ribosomal subunit. Mature ribosomes consist of a small (40S) and a large (60S) subunit. The 40S subunit contains about 33 different proteins and 1 molecule of RNA (18S). The 60S subunit contains about 49 different proteins and 3 molecules of RNA (25S, 5.8S and 5S).

This chain is Large ribosomal subunit protein uL16z (SC34), found in Oryza sativa subsp. indica (Rice).